The following is a 61-amino-acid chain: Small ribosomal subunit protein uS14 (61 aa).

The Zn(2+) site is built by C24, C27, C40, and C43.

This sequence belongs to the universal ribosomal protein uS14 family. Zinc-binding uS14 subfamily. As to quaternary structure, part of the 30S ribosomal subunit. Contacts proteins S3 and S10. It depends on Zn(2+) as a cofactor.

Binds 16S rRNA, required for the assembly of 30S particles and may also be responsible for determining the conformation of the 16S rRNA at the A site. The sequence is that of Small ribosomal subunit protein uS14 from Acidothermus cellulolyticus (strain ATCC 43068 / DSM 8971 / 11B).